The following is a 361-amino-acid chain: Phosphoribosylformylglycinamidine cyclo-ligase (361 aa).

It belongs to the AIR synthase family.

The protein resides in the cytoplasm. It catalyses the reaction 2-formamido-N(1)-(5-O-phospho-beta-D-ribosyl)acetamidine + ATP = 5-amino-1-(5-phospho-beta-D-ribosyl)imidazole + ADP + phosphate + H(+). It functions in the pathway purine metabolism; IMP biosynthesis via de novo pathway; 5-amino-1-(5-phospho-D-ribosyl)imidazole from N(2)-formyl-N(1)-(5-phospho-D-ribosyl)glycinamide: step 2/2. The protein is Phosphoribosylformylglycinamidine cyclo-ligase of Bartonella quintana (strain Toulouse) (Rochalimaea quintana).